The sequence spans 411 residues: Secretion apparatus protein BsaZ (411 aa).

4 consecutive transmembrane segments (helical) span residues 28–48 (IVAL…VDLT), 80–100 (IAAP…LVQS), 137–157 (ALLY…LYHA), and 175–195 (IVLT…VLIL). A disordered region spans residues 341–411 (AANRGGPPPE…APARTGDQNA (71 aa)). Over residues 370–404 (DACADNAFPDDAPPGAAAPNAGSPDGPAPDGGAPA) the composition is skewed to low complexity.

Belongs to the type III secretion exporter family.

It localises to the cell membrane. Part of the bsa type III secretion system, is involved in the intracellular replication of invading bacteria inside the host cell. Probably necessary for the lysis of the vacuole membrane and escape into the host cell cytoplasm. The sequence is that of Secretion apparatus protein BsaZ (bsaZ) from Burkholderia pseudomallei (strain 1710b).